The primary structure comprises 307 residues: Zygote arrest protein 2.L (307 aa).

The segment at 138-200 is disordered; it reads LPQGGRLPKK…EEPGNEEQTK (63 aa). Basic and acidic residues predominate over residues 156–186; it reads LKERAPSPEDKEREKVSEKEPDTKDELEKRP. The segment at 208–293 adopts a 3CxxC-type zinc-finger fold; sequence QKYGYFHCKD…QELCGRCKNK (86 aa).

The protein belongs to the ZAR1 family. In terms of tissue distribution, expressed in oocytes.

The protein localises to the cytoplasm. It is found in the cytoplasmic ribonucleoprotein granule. Its function is as follows. mRNA-binding protein required for maternal mRNA storage, translation and degradation during oocyte maturation. Probably promotes formation of some phase-separated membraneless compartment that stores maternal mRNAs in oocytes: acts by undergoing liquid-liquid phase separation upon binding to maternal mRNAs. Binds to the 3'-UTR of maternal mRNAs, inhibiting their translation. The sequence is that of Zygote arrest protein 2.L (zar2.L) from Xenopus laevis (African clawed frog).